A 477-amino-acid polypeptide reads, in one-letter code: 3-isopropylmalate dehydratase large subunit (477 aa).

3 residues coordinate [4Fe-4S] cluster: Cys358, Cys419, and Cys422.

The protein belongs to the aconitase/IPM isomerase family. LeuC type 1 subfamily. Heterodimer of LeuC and LeuD. It depends on [4Fe-4S] cluster as a cofactor.

It catalyses the reaction (2R,3S)-3-isopropylmalate = (2S)-2-isopropylmalate. Its pathway is amino-acid biosynthesis; L-leucine biosynthesis; L-leucine from 3-methyl-2-oxobutanoate: step 2/4. Functionally, catalyzes the isomerization between 2-isopropylmalate and 3-isopropylmalate, via the formation of 2-isopropylmaleate. In Acinetobacter baylyi (strain ATCC 33305 / BD413 / ADP1), this protein is 3-isopropylmalate dehydratase large subunit.